A 123-amino-acid chain; its full sequence is Fluoride-specific ion channel FluC (123 aa).

Helical transmembrane passes span 1–21 (MLEI…RYLM), 32–52 (ILSL…GLVI), 64–84 (IGLL…SFSY), and 99–119 (FGYT…GIYL). Na(+) is bound by residues Gly-74 and Thr-77.

The protein belongs to the fluoride channel Fluc/FEX (TC 1.A.43) family.

The protein localises to the cell inner membrane. The catalysed reaction is fluoride(in) = fluoride(out). Na(+) is not transported, but it plays an essential structural role and its presence is essential for fluoride channel function. In terms of biological role, fluoride-specific ion channel. Important for reducing fluoride concentration in the cell, thus reducing its toxicity. The protein is Fluoride-specific ion channel FluC of Gloeothece citriformis (strain PCC 7424) (Cyanothece sp. (strain PCC 7424)).